The chain runs to 767 residues: Photosystem I P700 chlorophyll a apoprotein A1 (767 aa).

The tract at residues 1 to 22 is disordered; that stretch reads MTISPPESGEKNKKVLEDPVKA. Residues 8 to 22 show a composition bias toward basic and acidic residues; sequence SGEKNKKVLEDPVKA. The next 8 helical transmembrane spans lie at 76 to 99, 162 to 185, 201 to 225, 309 to 327, 368 to 391, 407 to 433, 455 to 477, and 558 to 576; these read IFSAHFGHLAIIFIWMSAAFFHGA, LMALAIGAVIMAALMLHGGIYHYH, LNHHIAGLVGLGSLAWAGHCIHIGA, IAHHHLAFGVIAIIGGHLY, RHAQLSVNLACLGSLSILISHHMY, LGLFTHHMWIGALFIVGAGAHAGIAMV, ALISHLNWVCMWLGFHSFGLYIH, and LMIHHIHAFQIHVTVLILL. [4Fe-4S] cluster-binding residues include cysteine 600 and cysteine 609. 2 helical membrane passes run 616-637 and 681-703; these read HVFLALFWMYNCISIVIFHFSW and ISMYGLMFLGAHFIWAFSLMFLF. Histidine 692 lines the divinylchlorophyll a' pocket. 2 residues coordinate divinyl chlorophyll a: methionine 700 and tyrosine 708. Tryptophan 709 provides a ligand contact to phylloquinone. The helical transmembrane segment at 741-761 threads the bilayer; the sequence is AVGVAHFLLGGIATTWAFFHA.

It belongs to the PsaA/PsaB family. In terms of assembly, the PsaA/B heterodimer binds the P700 divinyl chlorophyll special pair and subsequent electron acceptors. PSI consists of a core antenna complex that captures photons, and an electron transfer chain that converts photonic excitation into a charge separation. The cyanobacterial PSI reaction center is composed of one copy each of PsaA,B,C,D,E,F,I,J,K,L,M and X, and forms trimeric complexes. PSI electron transfer chain: 5 divinyl chlorophyll a, 1 divinyl chlorophyll a', 2 phylloquinones and 3 4Fe-4S clusters. PSI core antenna: 90 divinyl chlorophyll a, 22 carotenoids, 3 phospholipids and 1 galactolipid. P700 is a divinyl chlorophyll a/divinyl chlorophyll a' dimer, A0 is one or more divinyl chlorophyll a, A1 is one or both phylloquinones and FX is a shared 4Fe-4S iron-sulfur center. is required as a cofactor.

The protein localises to the cellular thylakoid membrane. It carries out the reaction reduced [plastocyanin] + hnu + oxidized [2Fe-2S]-[ferredoxin] = oxidized [plastocyanin] + reduced [2Fe-2S]-[ferredoxin]. PsaA and PsaB bind P700, the primary electron donor of photosystem I (PSI), as well as the electron acceptors A0, A1 and FX. PSI is a plastocyanin/cytochrome c6-ferredoxin oxidoreductase, converting photonic excitation into a charge separation, which transfers an electron from the donor P700 chlorophyll pair to the spectroscopically characterized acceptors A0, A1, FX, FA and FB in turn. Oxidized P700 is reduced on the lumenal side of the thylakoid membrane by plastocyanin or cytochrome c6. This chain is Photosystem I P700 chlorophyll a apoprotein A1, found in Prochlorococcus marinus (strain MIT 9312).